The primary structure comprises 540 residues: Chaperonin GroEL (540 aa).

Residues 29-32 (TLGP), 86-90 (DGTTT), glycine 413, 476-478 (NAA), and aspartate 492 contribute to the ATP site.

This sequence belongs to the chaperonin (HSP60) family. Forms a cylinder of 14 subunits composed of two heptameric rings stacked back-to-back. Interacts with the co-chaperonin GroES.

It is found in the cytoplasm. The enzyme catalyses ATP + H2O + a folded polypeptide = ADP + phosphate + an unfolded polypeptide.. Its function is as follows. Together with its co-chaperonin GroES, plays an essential role in assisting protein folding. The GroEL-GroES system forms a nano-cage that allows encapsulation of the non-native substrate proteins and provides a physical environment optimized to promote and accelerate protein folding. The sequence is that of Chaperonin GroEL from Streptococcus pneumoniae (strain P1031).